The primary structure comprises 447 residues: uncharacterized protein (447 aa).

The next 2 helical transmembrane spans lie at 380–400 (VLEIGIFGVYALEAAHILLLT) and 412–432 (ILGFPLEFWIILVVTILGVYV).

Its subcellular location is the cell membrane. This is an uncharacterized protein from Methanocaldococcus jannaschii (strain ATCC 43067 / DSM 2661 / JAL-1 / JCM 10045 / NBRC 100440) (Methanococcus jannaschii).